The sequence spans 178 residues: RNA-binding protein (178 aa).

Residues 108-178 (SGFQKPKIGS…KGKGRRGGKR (71 aa)) are disordered. Residues 168-178 (SKGKGRRGGKR) show a composition bias toward basic residues.

This sequence belongs to the phytoreovirus RNA-binding protein family.

It localises to the host cytoplasm. Its function is as follows. Constituent of viral factories. Binds to ssRNA and dsRNA. The polypeptide is RNA-binding protein (Wound tumor virus (strain NJ) (WTV)).